The sequence spans 227 residues: UPF0173 metal-dependent hydrolase Saci_1512 (227 aa).

Belongs to the UPF0173 family.

The protein is UPF0173 metal-dependent hydrolase Saci_1512 of Sulfolobus acidocaldarius (strain ATCC 33909 / DSM 639 / JCM 8929 / NBRC 15157 / NCIMB 11770).